A 420-amino-acid polypeptide reads, in one-letter code: D-tagatose-1,6-bisphosphate aldolase subunit GatZ (420 aa).

It belongs to the GatZ/KbaZ family. GatZ subfamily. In terms of assembly, forms a complex with GatY.

It participates in carbohydrate metabolism; D-tagatose 6-phosphate degradation; D-glyceraldehyde 3-phosphate and glycerone phosphate from D-tagatose 6-phosphate: step 2/2. Component of the tagatose-1,6-bisphosphate aldolase GatYZ that is required for full activity and stability of the Y subunit. Could have a chaperone-like function for the proper and stable folding of GatY. When expressed alone, GatZ does not show any aldolase activity. Is involved in the catabolism of galactitol. This chain is D-tagatose-1,6-bisphosphate aldolase subunit GatZ, found in Escherichia coli (strain SMS-3-5 / SECEC).